The following is a 404-amino-acid chain: Alkane 1-monooxygenase 1 (404 aa).

4 helical membrane passes run 25-45, 47-67, 94-114, and 119-139; these read HLWI…YLVS, TGWS…VPLI, VLTY…AWWV, and IGVF…GLAL. 2 residues coordinate Fe cation: histidine 143 and histidine 147. The chain crosses the membrane as a helical span at residues 151 to 171; it reads TFDRWMAKLVLAVVGYGHFFI. Histidine 173, histidine 177, and histidine 178 together coordinate Fe cation. Residues 241-261 traverse the membrane as a helical segment; it reads VVLYAALLAFFGPLMLIFLPI. Residues histidine 317, histidine 320, and histidine 321 each coordinate Fe cation.

The protein belongs to the fatty acid desaturase type 1 family. AlkB subfamily. It depends on Fe(3+) as a cofactor.

Its subcellular location is the cell inner membrane. It catalyses the reaction octane + 2 reduced [rubredoxin] + O2 + 2 H(+) = 2 oxidized [rubredoxin] + octan-1-ol + H2O. Its pathway is hydrocarbon metabolism; alkane degradation. In terms of biological role, catalyzes the hydroxylation of n-alkanes and fatty acids in the presence of a NADH-rubredoxin reductase and rubredoxin. It preferably hydroxylases C5-C12 hydrocarbons. The chain is Alkane 1-monooxygenase 1 (alkB1) from Alcanivorax borkumensis (strain ATCC 700651 / DSM 11573 / NCIMB 13689 / SK2).